Consider the following 387-residue polypeptide: Oxidase FUB9 (387 aa).

The segment at 1-20 (MSRTNLPIQPAKMSDATSSK) is disordered. Residues 18–379 (SSKPQIFSIQ…TPAHLSLLNA (362 aa)) form the FMN hydroxy acid dehydrogenase domain. Tyr44 provides a ligand contact to a 2-oxocarboxylate. Residues Ser126, Gln150, and Thr178 each contribute to the FMN site. Arg187 provides a ligand contact to a 2-oxocarboxylate. Lys250 lines the FMN pocket. The Proton acceptor role is filled by His274. Arg277 serves as a coordination point for a 2-oxocarboxylate. FMN is bound by residues 305–309 (DGGFR) and 328–329 (GR).

It belongs to the FMN-dependent alpha-hydroxy acid dehydrogenase family. FMN serves as cofactor.

It participates in mycotoxin biosynthesis. In terms of biological role, oxidase; part of the gene cluster that mediates the biosynthesis of fusaric acid, a mycotoxin with low to moderate toxicity to animals and humans, but with high phytotoxic properties. L-aspartate is suggested as fusaric acid amino acid precursor that is activated and further processed to O-acetyl-L-homoserine by cluster enzymes aspartate kinase FUB3 and homoserine O-acetyltransferase FUB5, as well as enzymes of the primary metabolism. The polyketide synthase (PKS) FUB1 generates the triketide trans-2-hexenal which is presumptively released by the hydrolase FUB4 and linked to the NRPS-bound amino acid precursor by NAD(P)-dependent dehydrogenase FUB6. FUB1, FUB4, and the non-canonical NRPS Fub8 may form an enzyme complex. Further processing of the NRPS-bound intermediate might be carried out by FUB6 and the sulfhydrylase FUB7, enabling a spontaneous electrocyclization to close the carbon backbone of fusaric acid. Dihydrofusaric acid is likely to be released via reduction by the thioester reductase (TR) domain of FUB8 whereupon the final oxidation to fusaric acid may (also) be performed by the FMN-dependent dehydrogenase FUB9. The polypeptide is Oxidase FUB9 (Gibberella moniliformis (strain M3125 / FGSC 7600) (Maize ear and stalk rot fungus)).